The chain runs to 62 residues: ATP synthase subunit epsilon, mitochondrial (62 aa).

Residue Thr-52 is modified to Phosphothreonine.

It belongs to the eukaryotic ATPase epsilon family. F-type ATPases have 2 components, CF(1) - the catalytic core - and CF(0) - the membrane proton channel. CF(1) has five subunits: alpha(3), beta(3), gamma(1), delta(1), epsilon(1). CF(0) has three main subunits: a, b and c.

It localises to the mitochondrion. It is found in the mitochondrion inner membrane. Functionally, mitochondrial membrane ATP synthase (F(1)F(0) ATP synthase or Complex V) produces ATP from ADP in the presence of a proton gradient across the membrane which is generated by electron transport complexes of the respiratory chain. F-type ATPases consist of two structural domains, F(1) - containing the extramembraneous catalytic core, and F(0) - containing the membrane proton channel, linked together by a central stalk and a peripheral stalk. During catalysis, ATP synthesis in the catalytic domain of F(1) is coupled via a rotary mechanism of the central stalk subunits to proton translocation. Part of the complex F(1) domain and of the central stalk which is part of the complex rotary element. Rotation of the central stalk against the surrounding alpha(3)beta(3) subunits leads to hydrolysis of ATP in three separate catalytic sites on the beta subunits. This Saccharomyces cerevisiae (strain ATCC 204508 / S288c) (Baker's yeast) protein is ATP synthase subunit epsilon, mitochondrial (ATP15).